The following is a 281-amino-acid chain: ATP synthase gamma chain (281 aa).

The protein belongs to the ATPase gamma chain family. F-type ATPases have 2 components, CF(1) - the catalytic core - and CF(0) - the membrane proton channel. CF(1) has five subunits: alpha(3), beta(3), gamma(1), delta(1), epsilon(1). CF(0) has three main subunits: a, b and c.

Its subcellular location is the cell membrane. In terms of biological role, produces ATP from ADP in the presence of a proton gradient across the membrane. The gamma chain is believed to be important in regulating ATPase activity and the flow of protons through the CF(0) complex. The chain is ATP synthase gamma chain from Desulfitobacterium hafniense (strain DSM 10664 / DCB-2).